The chain runs to 337 residues: Cytoskeleton protein RodZ (337 aa).

Residues 1-111 (MNTEATHDQN…LGKRRKKRDG (111 aa)) lie on the Cytoplasmic side of the membrane. In terms of domain architecture, HTH cro/C1-type spans 19 to 71 (LRNAREQLGLSQQAVAERLCLKVSTVRDIEEDKAPADLASTFLRGYIRSYARL). The H-T-H motif DNA-binding region spans 30 to 49 (QQAVAERLCLKVSTVRDIEE). A helical; Signal-anchor for type II membrane protein transmembrane segment spans residues 112 to 132 (WLMTFTWLVLFVVIGLSGAWW). The Periplasmic segment spans residues 133-337 (WQDHKAQQEE…TLNAEQSPAQ (205 aa)). Residues 145 to 167 (TMADQSSAELSSNSEQGQSVPLN) show a composition bias toward polar residues. The segment at 145 to 236 (TMADQSSAEL…TAATTPDGAA (92 aa)) is disordered. Low complexity predominate over residues 168-207 (TSTTTDPATTSTPPASVDTTATNTQTPAVTAPAPAVDPQQ). Positions 208-218 (NAVVSPSQANV) are enriched in polar residues. The segment covering 219 to 236 (DTAATPAPTAATTPDGAA) has biased composition (low complexity).

This sequence belongs to the RodZ family.

It is found in the cell inner membrane. In terms of biological role, cytoskeletal protein that is involved in cell-shape control through regulation of the length of the long axis. The sequence is that of Cytoskeleton protein RodZ from Escherichia coli O139:H28 (strain E24377A / ETEC).